The chain runs to 363 residues: Small ribosomal subunit biogenesis GTPase RsgA (363 aa).

Residues 112–268 enclose the CP-type G domain; sequence HQQVIAANID…LIDTPGMREL (157 aa). GTP is bound by residues 157-160 and 210-218; these read TKAD and GSSGAGKST. Residues cysteine 291, cysteine 296, histidine 298, and cysteine 304 each contribute to the Zn(2+) site. The interval 340–363 is disordered; sequence RVAQNNRGKGSGKRPASVDRPGRH.

This sequence belongs to the TRAFAC class YlqF/YawG GTPase family. RsgA subfamily. Monomer. Associates with 30S ribosomal subunit, binds 16S rRNA. Zn(2+) serves as cofactor.

Its subcellular location is the cytoplasm. One of several proteins that assist in the late maturation steps of the functional core of the 30S ribosomal subunit. Helps release RbfA from mature subunits. May play a role in the assembly of ribosomal proteins into the subunit. Circularly permuted GTPase that catalyzes slow GTP hydrolysis, GTPase activity is stimulated by the 30S ribosomal subunit. This is Small ribosomal subunit biogenesis GTPase RsgA from Xanthomonas axonopodis pv. citri (strain 306).